An 83-amino-acid polypeptide reads, in one-letter code: Mitochondrial import inner membrane translocase subunit Tim8 B (83 aa).

At Ala-2 the chain carries N-acetylalanine. The short motif at Cys-36 to Cys-59 is the Twin CX3C motif element. 2 disulfide bridges follow: Cys-36–Cys-59 and Cys-40–Cys-55.

Belongs to the small Tim family. In terms of assembly, heterohexamer; possibly composed of 3 copies of TIMM8B and 3 copies of TIMM13, named soluble 70 kDa complex. Associates with the TIM22 complex, whose core is composed of TIMM22.

It localises to the mitochondrion inner membrane. Its function is as follows. Probable mitochondrial intermembrane chaperone that participates in the import and insertion of some multi-pass transmembrane proteins into the mitochondrial inner membrane. Also required for the transfer of beta-barrel precursors from the TOM complex to the sorting and assembly machinery (SAM complex) of the outer membrane. Acts as a chaperone-like protein that protects the hydrophobic precursors from aggregation and guide them through the mitochondrial intermembrane space. This is Mitochondrial import inner membrane translocase subunit Tim8 B (TIMM8B) from Bos taurus (Bovine).